A 150-amino-acid polypeptide reads, in one-letter code: D-aminoacyl-tRNA deacylase (150 aa).

The Gly-cisPro motif, important for rejection of L-amino acids signature appears at 138–139 (GP).

Belongs to the DTD family. Homodimer.

The protein resides in the cytoplasm. It catalyses the reaction glycyl-tRNA(Ala) + H2O = tRNA(Ala) + glycine + H(+). It carries out the reaction a D-aminoacyl-tRNA + H2O = a tRNA + a D-alpha-amino acid + H(+). Its function is as follows. An aminoacyl-tRNA editing enzyme that deacylates mischarged D-aminoacyl-tRNAs. Also deacylates mischarged glycyl-tRNA(Ala), protecting cells against glycine mischarging by AlaRS. Acts via tRNA-based rather than protein-based catalysis; rejects L-amino acids rather than detecting D-amino acids in the active site. By recycling D-aminoacyl-tRNA to D-amino acids and free tRNA molecules, this enzyme counteracts the toxicity associated with the formation of D-aminoacyl-tRNA entities in vivo and helps enforce protein L-homochirality. The protein is D-aminoacyl-tRNA deacylase of Cytophaga hutchinsonii (strain ATCC 33406 / DSM 1761 / CIP 103989 / NBRC 15051 / NCIMB 9469 / D465).